The sequence spans 636 residues: Protein SOSEKI 2 (636 aa).

The DIX-like oligomerization domain stretch occupies residues 9–103 (HKIEVIYLLS…YVLKALEVMD (95 aa)). 4 disordered regions span residues 164-188 (VHNN…SRVP), 281-304 (HGRL…TVDI), 340-393 (VEGS…TSAK), and 499-524 (LGSG…VSRP). 2 stretches are compositionally biased toward polar residues: residues 375 to 390 (SSKS…TYET) and 499 to 510 (LGSGQASESFSP).

It belongs to the SOSEKI family. Homodimer. Forms long polymer filaments with other SOKs proteins polymers crucial for polar localization and biological activity.

The protein resides in the cell membrane. Its function is as follows. SOSEKI proteins locally interpret global polarity cues and can influence cell division orientation to coordinate cell polarization relative to body axes. The polypeptide is Protein SOSEKI 2 (Physcomitrium patens (Spreading-leaved earth moss)).